The primary structure comprises 1010 residues: Regulator of telomere elongation helicase 1 homolog (1010 aa).

Residues N7–T333 enclose the Helicase ATP-binding domain. Residue S42–T49 coordinates ATP. C157, C175, C184, and C220 together coordinate [4Fe-4S] cluster. The short motif at D263–H266 is the DEAH box element. Residues T912–E931 are disordered. Over residues P918 to E931 the composition is skewed to basic and acidic residues.

It belongs to the helicase family. RAD3/XPD subfamily.

The protein resides in the nucleus. It carries out the reaction ATP + H2O = ADP + phosphate + H(+). In terms of biological role, a probable ATP-dependent DNA helicase implicated in DNA repair and the maintenance of genomic stability. Acts as an anti-recombinase to counteract toxic recombination and limit crossover during meiosis. Regulates meiotic recombination and crossover homeostasis by physically dissociating strand invasion events and thereby promotes noncrossover repair by meiotic synthesis dependent strand annealing (SDSA) as well as disassembly of D loop recombination intermediates. This chain is Regulator of telomere elongation helicase 1 homolog, found in Aedes aegypti (Yellowfever mosquito).